The following is a 149-amino-acid chain: Urease accessory protein UreE (149 aa).

Belongs to the UreE family.

It localises to the cytoplasm. Involved in urease metallocenter assembly. Binds nickel. Probably functions as a nickel donor during metallocenter assembly. The protein is Urease accessory protein UreE of Prochlorococcus marinus (strain MIT 9312).